The sequence spans 219 residues: Thiamine-phosphate synthase (219 aa).

4-amino-2-methyl-5-(diphosphooxymethyl)pyrimidine is bound by residues 48–52 and N80; that span reads QLREK. Residues D81 and D100 each contribute to the Mg(2+) site. Residue S119 participates in 4-amino-2-methyl-5-(diphosphooxymethyl)pyrimidine binding. 145-147 serves as a coordination point for 2-[(2R,5Z)-2-carboxy-4-methylthiazol-5(2H)-ylidene]ethyl phosphate; that stretch reads TPT. 4-amino-2-methyl-5-(diphosphooxymethyl)pyrimidine is bound at residue K148. 2-[(2R,5Z)-2-carboxy-4-methylthiazol-5(2H)-ylidene]ethyl phosphate contacts are provided by residues G176 and 196–197; that span reads VS.

This sequence belongs to the thiamine-phosphate synthase family. Requires Mg(2+) as cofactor.

It catalyses the reaction 2-[(2R,5Z)-2-carboxy-4-methylthiazol-5(2H)-ylidene]ethyl phosphate + 4-amino-2-methyl-5-(diphosphooxymethyl)pyrimidine + 2 H(+) = thiamine phosphate + CO2 + diphosphate. It carries out the reaction 2-(2-carboxy-4-methylthiazol-5-yl)ethyl phosphate + 4-amino-2-methyl-5-(diphosphooxymethyl)pyrimidine + 2 H(+) = thiamine phosphate + CO2 + diphosphate. The catalysed reaction is 4-methyl-5-(2-phosphooxyethyl)-thiazole + 4-amino-2-methyl-5-(diphosphooxymethyl)pyrimidine + H(+) = thiamine phosphate + diphosphate. The protein operates within cofactor biosynthesis; thiamine diphosphate biosynthesis; thiamine phosphate from 4-amino-2-methyl-5-diphosphomethylpyrimidine and 4-methyl-5-(2-phosphoethyl)-thiazole: step 1/1. Condenses 4-methyl-5-(beta-hydroxyethyl)thiazole monophosphate (THZ-P) and 2-methyl-4-amino-5-hydroxymethyl pyrimidine pyrophosphate (HMP-PP) to form thiamine monophosphate (TMP). The polypeptide is Thiamine-phosphate synthase (Albidiferax ferrireducens (strain ATCC BAA-621 / DSM 15236 / T118) (Rhodoferax ferrireducens)).